Here is a 482-residue protein sequence, read N- to C-terminus: Probable cytosol aminopeptidase (482 aa).

Lys251 and Asp256 together coordinate Mn(2+). Lys263 is an active-site residue. 3 residues coordinate Mn(2+): Asp274, Asp333, and Glu335. Arg337 is an active-site residue.

This sequence belongs to the peptidase M17 family. It depends on Mn(2+) as a cofactor.

It is found in the cytoplasm. It carries out the reaction Release of an N-terminal amino acid, Xaa-|-Yaa-, in which Xaa is preferably Leu, but may be other amino acids including Pro although not Arg or Lys, and Yaa may be Pro. Amino acid amides and methyl esters are also readily hydrolyzed, but rates on arylamides are exceedingly low.. It catalyses the reaction Release of an N-terminal amino acid, preferentially leucine, but not glutamic or aspartic acids.. Functionally, presumably involved in the processing and regular turnover of intracellular proteins. Catalyzes the removal of unsubstituted N-terminal amino acids from various peptides. The chain is Probable cytosol aminopeptidase from Acinetobacter baumannii (strain AB307-0294).